The chain runs to 676 residues: Protein kinase C delta type (676 aa).

The C2 domain maps to 1–106 (MAPFLRIAFN…KNNGKAEFWL (106 aa)). Residues T43 and T50 each carry the phosphothreonine modification. Phosphotyrosine is present on Y64. Residue S130 is modified to Phosphoserine. The residue at position 141 (T141) is a Phosphothreonine. The residue at position 155 (Y155) is a Phosphotyrosine. The Phorbol-ester/DAG-type 1 zinc-finger motif lies at 158 to 208 (NHEFIATFFGQPTFCSVCKDFVWGLNKQGYKCRQCNAAIHKKCIDKIIGRC). Phosphothreonine is present on T218. The Phorbol-ester/DAG-type 2 zinc-finger motif lies at 230-280 (PHRFKVHNYMSPTFCDHCGSLLWGLVKQGLKCEDCGMNVHHKCREKVANLC). A phosphoserine; by autocatalysis mark is found at S299, S302, and S304. S307 is subject to Phosphoserine. Y313 carries the phosphotyrosine modification. A Phosphotyrosine; by SRC modification is found at Y334. Positions 349–603 (FIFHKVLGKG…TGNIKIHPFF (255 aa)) constitute a Protein kinase domain. ATP is bound at residue 355–363 (LGKGSFGKV). Y374 is modified (phosphotyrosine). Residue K378 coordinates ATP. Position 451 is a phosphothreonine (T451). The Proton acceptor role is filled by D473. Phosphoserine is present on residues S503 and S506. T507 carries the post-translational modification Phosphothreonine; by autocatalysis. At Y567 the chain carries Phosphotyrosine. The region spanning 604 to 675 (KTINWTLLEK…VNPKFEHLLE (72 aa)) is the AGC-kinase C-terminal domain. Residues S645, S654, S658, and S664 each carry the phosphoserine modification.

Belongs to the protein kinase superfamily. AGC Ser/Thr protein kinase family. PKC subfamily. As to quaternary structure, interacts with PDPK1 (via N-terminal region). Interacts with RAD9A. Interacts with CDCP1. Interacts with MUC1. Interacts with VASP. Interacts with CAVIN3. Interacts with PRKD2 (via N-terminus and zing-finger domain 1 and 2) in response to oxidative stress; the interaction is independent of PRKD2 tyrosine phosphorylation. Interacts with PLSC3; interaction is enhanced by UV irradiation. Interacts with PRKCH upstream open reading frame 2; the interaction leads to inhibition of kinase activity. Post-translationally, autophosphorylated and/or phosphorylated at Thr-507, within the activation loop; phosphorylation at Thr-507 is not a prerequisite for enzymatic activity. Autophosphorylated at Ser-299, Ser-302 and Ser-304. Upon TNFSF10/TRAIL treatment, phosphorylated at Tyr-155; phosphorylation is required for its translocation to the endoplasmic reticulum and cleavage by caspase-3. Phosphorylated at Tyr-313, Tyr-334 and Tyr-567; phosphorylation of Tyr-313 and Tyr-567 following thrombin or zymosan stimulation potentiates its kinase activity. Phosphorylated by protein kinase PDPK1; phosphorylation is inhibited by the apoptotic C-terminal cleavage product of PKN2. Phosphorylated at Tyr-313 through a SYK and SRC mechanism downstream of C-type lectin receptors activation, promoting its activation. Proteolytically cleaved into a catalytic subunit and a regulatory subunit by caspase-3 during apoptosis which results in kinase activation.

It is found in the cytoplasm. The protein resides in the perinuclear region. It localises to the nucleus. Its subcellular location is the cell membrane. The protein localises to the mitochondrion. It is found in the endomembrane system. The catalysed reaction is L-seryl-[protein] + ATP = O-phospho-L-seryl-[protein] + ADP + H(+). It carries out the reaction L-threonyl-[protein] + ATP = O-phospho-L-threonyl-[protein] + ADP + H(+). It catalyses the reaction L-tyrosyl-[protein] + ATP = O-phospho-L-tyrosyl-[protein] + ADP + H(+). Its activity is regulated as follows. Novel PKCs (PRKCD, PRKCE, PRKCH and PRKCQ) are calcium-insensitive, but activated by diacylglycerol (DAG) and phosphatidylserine. Three specific sites; Thr-507 (activation loop of the kinase domain), Ser-645 (turn motif) and Ser-664 (hydrophobic region), need to be phosphorylated for its full activation. Activated by caspase-3 (CASP3) cleavage during apoptosis. After cleavage, the pseudosubstrate motif in the regulatory subunit is released from the substrate recognition site of the catalytic subunit, which enables PRKCD to become constitutively activated. The catalytic subunit which displays properties of a sphingosine-dependent protein kinase is activated by D-erythro-sphingosine (Sph) or N,N-dimethyl-D-erythrosphingosine (DMS) or N,N,N-trimethyl-D-erythrosphingosine (TMS), but not by ceramide or Sph-1-P and is strongly inhibited by phosphatidylserine. Inhibited by PRKCH upstream open reading frame 2. In terms of biological role, calcium-independent, phospholipid- and diacylglycerol (DAG)-dependent serine/threonine-protein kinase that plays contrasting roles in cell death and cell survival by functioning as a pro-apoptotic protein during DNA damage-induced apoptosis, but acting as an anti-apoptotic protein during cytokine receptor-initiated cell death, is involved in tumor suppression as well as survival of several cancers, is required for oxygen radical production by NADPH oxidase and acts as positive or negative regulator in platelet functional responses. Negatively regulates B cell proliferation and also has an important function in self-antigen induced B cell tolerance induction. Upon DNA damage, activates the promoter of the death-promoting transcription factor BCLAF1/Btf to trigger BCLAF1-mediated p53/TP53 gene transcription and apoptosis. In response to oxidative stress, interact with and activate CHUK/IKKA in the nucleus, causing the phosphorylation of p53/TP53. In the case of ER stress or DNA damage-induced apoptosis, can form a complex with the tyrosine-protein kinase ABL1 which trigger apoptosis independently of p53/TP53. In cytosol can trigger apoptosis by activating MAPK11 or MAPK14, inhibiting AKT1 and decreasing the level of X-linked inhibitor of apoptosis protein (XIAP), whereas in nucleus induces apoptosis via the activation of MAPK8 or MAPK9. Upon ionizing radiation treatment, is required for the activation of the apoptosis regulators BAX and BAK, which trigger the mitochondrial cell death pathway. Can phosphorylate MCL1 and target it for degradation which is sufficient to trigger for BAX activation and apoptosis. Is required for the control of cell cycle progression both at G1/S and G2/M phases. Mediates phorbol 12-myristate 13-acetate (PMA)-induced inhibition of cell cycle progression at G1/S phase by up-regulating the CDK inhibitor CDKN1A/p21 and inhibiting the cyclin CCNA2 promoter activity. In response to UV irradiation can phosphorylate CDK1, which is important for the G2/M DNA damage checkpoint activation. Can protect glioma cells from the apoptosis induced by TNFSF10/TRAIL, probably by inducing increased phosphorylation and subsequent activation of AKT1. Is highly expressed in a number of cancer cells and promotes cell survival and resistance against chemotherapeutic drugs by inducing cyclin D1 (CCND1) and hyperphosphorylation of RB1, and via several pro-survival pathways, including NF-kappa-B, AKT1 and MAPK1/3 (ERK1/2). Involved in antifungal immunity by mediating phosphorylation and activation of CARD9 downstream of C-type lectin receptors activation, promoting interaction between CARD9 and BCL10, followed by activation of NF-kappa-B and MAP kinase p38 pathways. Can also act as tumor suppressor upon mitogenic stimulation with PMA or TPA. In N-formyl-methionyl-leucyl-phenylalanine (fMLP)-treated cells, is required for NCF1 (p47-phox) phosphorylation and activation of NADPH oxidase activity, and regulates TNF-elicited superoxide anion production in neutrophils, by direct phosphorylation and activation of NCF1 or indirectly through MAPK1/3 (ERK1/2) signaling pathways. May also play a role in the regulation of NADPH oxidase activity in eosinophil after stimulation with IL5, leukotriene B4 or PMA. In collagen-induced platelet aggregation, acts a negative regulator of filopodia formation and actin polymerization by interacting with and negatively regulating VASP phosphorylation. Downstream of PAR1, PAR4 and CD36/GP4 receptors, regulates differentially platelet dense granule secretion; acts as a positive regulator in PAR-mediated granule secretion, whereas it negatively regulates CD36/GP4-mediated granule release. Phosphorylates MUC1 in the C-terminal and regulates the interaction between MUC1 and beta-catenin. The catalytic subunit phosphorylates 14-3-3 proteins (YWHAB, YWHAZ and YWHAH) in a sphingosine-dependent fashion. Phosphorylates ELAVL1 in response to angiotensin-2 treatment. Phosphorylates mitochondrial phospholipid scramblase 3 (PLSCR3), resulting in increased cardiolipin expression on the mitochondrial outer membrane which facilitates apoptosis. Phosphorylates SMPD1 which induces SMPD1 secretion. The chain is Protein kinase C delta type from Homo sapiens (Human).